A 271-amino-acid chain; its full sequence is Inactive phospholipid phosphatase 7 (271 aa).

Positions 1–66 (MPASQSRARA…RERRQSQQLP (66 aa)) are disordered. Residues 1 to 112 (MPASQSRARA…AASWASARSM (112 aa)) are Cytoplasmic-facing. Phosphoserine occurs at positions 43 and 62. Positions 70–91 (CMQLNPSFKGIAFNSLLAIDIC) are interaction with MTOR. The helical transmembrane segment at 113 to 133 (VKLIGITGHGIPWIGGTILCL) threads the bilayer. Residues 134 to 141 (VKSSTLAG) lie on the Extracellular side of the membrane. Residues 142–162 (QEVLMNLLLALLLDIMTVAGV) traverse the membrane as a helical segment. Topologically, residues 163–202 (QKLIKRRGPYETSPSLLDYLTMDIYAFPAGHASRAAMVSK) are cytoplasmic. The chain crosses the membrane as a helical span at residues 203–223 (FFLSHLVLAVPLRVLLVLWAL). The Extracellular segment spans residues 224 to 239 (CVGLSRVMIGRHHVTD). A helical membrane pass occupies residues 240 to 260 (VLSGFVIGYLQFRLVELVWMP). Residues 261 to 271 (SSTCQMLISAW) lie on the Cytoplasmic side of the membrane.

It belongs to the PA-phosphatase related phosphoesterase family. As to quaternary structure, homo and heterooligomer. Interacts with MTOR; controls MTOR-dependent IGF2 expression during myoblast differentiation.

It is found in the nucleus envelope. The protein localises to the endoplasmic reticulum membrane. The protein resides in the membrane. In terms of biological role, plays a role as negative regulator of myoblast differentiation, in part through effects on MTOR signaling. Has no detectable enzymatic activity. This chain is Inactive phospholipid phosphatase 7, found in Homo sapiens (Human).